The chain runs to 460 residues: Indoleacetamide hydrolase (460 aa).

Active-site charge relay system residues include K71 and S146. The Acyl-ester intermediate role is filled by S169.

This sequence belongs to the amidase family.

Its pathway is plant hormone metabolism; auxin biosynthesis. Functionally, hydrolyzes indole-3-acetamide (IAM) into indole-3-acetic acid (IAA). The chain is Indoleacetamide hydrolase (iaaH) from Pantoea agglomerans pv. gypsophilae (Erwinia herbicola).